A 343-amino-acid polypeptide reads, in one-letter code: L-threonine 3-dehydrogenase (343 aa).

Position 40 (C40) interacts with Zn(2+). Catalysis depends on charge relay system residues T42 and H45. Residues H65, E66, C95, C98, C101, and C109 each coordinate Zn(2+). NAD(+) is bound by residues I177, D197, R202, 264–266, and 288–289; these read LGI and IY.

It belongs to the zinc-containing alcohol dehydrogenase family. As to quaternary structure, homotetramer. Zn(2+) serves as cofactor.

It localises to the cytoplasm. The enzyme catalyses L-threonine + NAD(+) = (2S)-2-amino-3-oxobutanoate + NADH + H(+). Its pathway is amino-acid degradation; L-threonine degradation via oxydo-reductase pathway; glycine from L-threonine: step 1/2. Its function is as follows. Catalyzes the NAD(+)-dependent oxidation of L-threonine to 2-amino-3-ketobutyrate. In Vibrio vulnificus (strain YJ016), this protein is L-threonine 3-dehydrogenase.